The sequence spans 596 residues: Arginine--tRNA ligase (596 aa).

Residues 128–138 (ANPTSSLHVGH) carry the 'HIGH' region motif.

It belongs to the class-I aminoacyl-tRNA synthetase family. In terms of assembly, monomer.

It localises to the cytoplasm. It carries out the reaction tRNA(Arg) + L-arginine + ATP = L-arginyl-tRNA(Arg) + AMP + diphosphate. The chain is Arginine--tRNA ligase from Acinetobacter baylyi (strain ATCC 33305 / BD413 / ADP1).